Reading from the N-terminus, the 360-residue chain is Aminomethyltransferase (360 aa).

The protein belongs to the GcvT family. As to quaternary structure, the glycine cleavage system is composed of four proteins: P, T, L and H.

It catalyses the reaction N(6)-[(R)-S(8)-aminomethyldihydrolipoyl]-L-lysyl-[protein] + (6S)-5,6,7,8-tetrahydrofolate = N(6)-[(R)-dihydrolipoyl]-L-lysyl-[protein] + (6R)-5,10-methylene-5,6,7,8-tetrahydrofolate + NH4(+). In terms of biological role, the glycine cleavage system catalyzes the degradation of glycine. This chain is Aminomethyltransferase, found in Pseudomonas syringae pv. tomato (strain ATCC BAA-871 / DC3000).